The primary structure comprises 376 residues: uncharacterized protein (376 aa).

The chain crosses the membrane as a helical span at residues 24–44; that stretch reads YLSIISIISVFLLNSSIVYSC. Position 251 (His251) interacts with Zn(2+).

This sequence belongs to the peptidase M23B family. It depends on Zn(2+) as a cofactor.

Its subcellular location is the cell membrane. This is an uncharacterized protein from Buchnera aphidicola subsp. Baizongia pistaciae (strain Bp).